The sequence spans 160 residues: SsrA-binding protein (160 aa).

Belongs to the SmpB family.

It localises to the cytoplasm. Its function is as follows. Required for rescue of stalled ribosomes mediated by trans-translation. Binds to transfer-messenger RNA (tmRNA), required for stable association of tmRNA with ribosomes. tmRNA and SmpB together mimic tRNA shape, replacing the anticodon stem-loop with SmpB. tmRNA is encoded by the ssrA gene; the 2 termini fold to resemble tRNA(Ala) and it encodes a 'tag peptide', a short internal open reading frame. During trans-translation Ala-aminoacylated tmRNA acts like a tRNA, entering the A-site of stalled ribosomes, displacing the stalled mRNA. The ribosome then switches to translate the ORF on the tmRNA; the nascent peptide is terminated with the 'tag peptide' encoded by the tmRNA and targeted for degradation. The ribosome is freed to recommence translation, which seems to be the essential function of trans-translation. This Rhodospirillum rubrum (strain ATCC 11170 / ATH 1.1.1 / DSM 467 / LMG 4362 / NCIMB 8255 / S1) protein is SsrA-binding protein.